The primary structure comprises 152 residues: Endoribonuclease YbeY (152 aa).

Positions 114, 118, and 124 each coordinate Zn(2+).

Belongs to the endoribonuclease YbeY family. The cofactor is Zn(2+).

It localises to the cytoplasm. Its function is as follows. Single strand-specific metallo-endoribonuclease involved in late-stage 70S ribosome quality control and in maturation of the 3' terminus of the 16S rRNA. In Wigglesworthia glossinidia brevipalpis, this protein is Endoribonuclease YbeY.